Consider the following 177-residue polypeptide: ATP synthase subunit delta (177 aa).

Belongs to the ATPase delta chain family. As to quaternary structure, F-type ATPases have 2 components, F(1) - the catalytic core - and F(0) - the membrane proton channel. F(1) has five subunits: alpha(3), beta(3), gamma(1), delta(1), epsilon(1). F(0) has three main subunits: a(1), b(2) and c(10-14). The alpha and beta chains form an alternating ring which encloses part of the gamma chain. F(1) is attached to F(0) by a central stalk formed by the gamma and epsilon chains, while a peripheral stalk is formed by the delta and b chains.

The protein localises to the cell inner membrane. Its function is as follows. F(1)F(0) ATP synthase produces ATP from ADP in the presence of a proton or sodium gradient. F-type ATPases consist of two structural domains, F(1) containing the extramembraneous catalytic core and F(0) containing the membrane proton channel, linked together by a central stalk and a peripheral stalk. During catalysis, ATP synthesis in the catalytic domain of F(1) is coupled via a rotary mechanism of the central stalk subunits to proton translocation. This protein is part of the stalk that links CF(0) to CF(1). It either transmits conformational changes from CF(0) to CF(1) or is implicated in proton conduction. The protein is ATP synthase subunit delta of Shewanella halifaxensis (strain HAW-EB4).